Here is a 103-residue protein sequence, read N- to C-terminus: MYAVIVTGGKQYKVAEGEYLKIEKLEVATGESVTFDRVLLVANGDDVNIGAPVVAGATVKAEVISQGRHDKVRIIKFRRRKHHMKRMGHRQWFTEIKITGIQA.

Belongs to the bacterial ribosomal protein bL21 family. In terms of assembly, part of the 50S ribosomal subunit. Contacts protein L20.

This protein binds to 23S rRNA in the presence of protein L20. This Pseudomonas fluorescens (strain Pf0-1) protein is Large ribosomal subunit protein bL21.